The following is a 491-amino-acid chain: Glutamate--tRNA ligase (491 aa).

The 'HIGH' region signature appears at 9 to 19 (PSPTGTPHVGL). Positions 253–257 (KLSKR) match the 'KMSKS' region motif. Lys256 lines the ATP pocket.

It belongs to the class-I aminoacyl-tRNA synthetase family. Glutamate--tRNA ligase type 1 subfamily. Monomer.

Its subcellular location is the cytoplasm. It carries out the reaction tRNA(Glu) + L-glutamate + ATP = L-glutamyl-tRNA(Glu) + AMP + diphosphate. Catalyzes the attachment of glutamate to tRNA(Glu) in a two-step reaction: glutamate is first activated by ATP to form Glu-AMP and then transferred to the acceptor end of tRNA(Glu). The sequence is that of Glutamate--tRNA ligase from Mycolicibacterium gilvum (strain PYR-GCK) (Mycobacterium gilvum (strain PYR-GCK)).